The chain runs to 232 residues: Phosphoglycolate phosphatase (232 aa).

Aspartate 13 (nucleophile) is an active-site residue. Mg(2+) contacts are provided by aspartate 13, aspartate 15, and aspartate 175.

This sequence belongs to the HAD-like hydrolase superfamily. CbbY/CbbZ/Gph/YieH family. As to quaternary structure, monomer. The cofactor is Mg(2+). It depends on chloride as a cofactor.

It catalyses the reaction 2-phosphoglycolate + H2O = glycolate + phosphate. It participates in organic acid metabolism; glycolate biosynthesis; glycolate from 2-phosphoglycolate: step 1/1. Specifically catalyzes the dephosphorylation of 2-phosphoglycolate. Is involved in the dissimilation of the intracellular 2-phosphoglycolate formed during the DNA repair of 3'-phosphoglycolate ends, a major class of DNA lesions induced by oxidative stress. This chain is Phosphoglycolate phosphatase, found in Yersinia pestis.